Reading from the N-terminus, the 238-residue chain is MTTSAVKVLIHGASGRMGKALLRLAAEDQTLQVVGAVVGRSPSQRVVDGVPFFAASELGGAPAFDVAIDFSLPQGFAPILALCAQRGKPLVSGTTGLDEAQRAALRDAAQQIALVWASNFSLGVAVLTELVERAAGTLPGWDCDILESHHVHKQDAPSGTALTLGEAATGSGAQPRYVSLRAGDIVGEHTVQFTGLGERVELVHRATNRDIFARGALHAAKRLIGKPAGSYRVRDLVL.

12 to 17 lines the NAD(+) pocket; it reads GASGRM. Arg40 is an NADP(+) binding site. NAD(+) contacts are provided by residues 93-95 and 117-120; these read GTT and ASNF. The active-site Proton donor/acceptor is the His149. Position 150 (His150) interacts with (S)-2,3,4,5-tetrahydrodipicolinate. Lys153 (proton donor) is an active-site residue. A (S)-2,3,4,5-tetrahydrodipicolinate-binding site is contributed by 159–160; it reads GT.

This sequence belongs to the DapB family.

The protein resides in the cytoplasm. The catalysed reaction is (S)-2,3,4,5-tetrahydrodipicolinate + NAD(+) + H2O = (2S,4S)-4-hydroxy-2,3,4,5-tetrahydrodipicolinate + NADH + H(+). It carries out the reaction (S)-2,3,4,5-tetrahydrodipicolinate + NADP(+) + H2O = (2S,4S)-4-hydroxy-2,3,4,5-tetrahydrodipicolinate + NADPH + H(+). It participates in amino-acid biosynthesis; L-lysine biosynthesis via DAP pathway; (S)-tetrahydrodipicolinate from L-aspartate: step 4/4. Functionally, catalyzes the conversion of 4-hydroxy-tetrahydrodipicolinate (HTPA) to tetrahydrodipicolinate. The protein is 4-hydroxy-tetrahydrodipicolinate reductase of Xanthomonas axonopodis pv. citri (strain 306).